Reading from the N-terminus, the 290-residue chain is 33 kDa chaperonin (290 aa).

Intrachain disulfides connect Cys-235-Cys-237 and Cys-268-Cys-271.

The protein belongs to the HSP33 family. Post-translationally, under oxidizing conditions two disulfide bonds are formed involving the reactive cysteines. Under reducing conditions zinc is bound to the reactive cysteines and the protein is inactive.

Its subcellular location is the cytoplasm. Functionally, redox regulated molecular chaperone. Protects both thermally unfolding and oxidatively damaged proteins from irreversible aggregation. Plays an important role in the bacterial defense system toward oxidative stress. In Streptococcus mutans serotype c (strain ATCC 700610 / UA159), this protein is 33 kDa chaperonin.